A 58-amino-acid polypeptide reads, in one-letter code: uncharacterized protein (58 aa).

Over residues 23–51 (TTTSTSTTTTSTTTSTTTSTTTTTTTTTT) the composition is skewed to low complexity. A disordered region spans residues 23–58 (TTTSTSTTTTSTTTSTTTSTTTTTTTTTTKDFNTET).

This is an uncharacterized protein from Dictyostelium discoideum (Social amoeba).